We begin with the raw amino-acid sequence, 94 residues long: Large ribosomal subunit protein bL27 (94 aa).

The propeptide occupies 1–9 (MLELNLQLF). Residues 12–33 (KKGGGSTSNGRDSQAKRLGAKA) are disordered.

It belongs to the bacterial ribosomal protein bL27 family. In terms of processing, the N-terminus is cleaved by ribosomal processing cysteine protease Prp.

In Lactococcus lactis subsp. cremoris (strain MG1363), this protein is Large ribosomal subunit protein bL27.